Consider the following 554-residue polypeptide: Formate--tetrahydrofolate ligase (554 aa).

64–71 (TPYGEGKT) contributes to the ATP binding site.

It belongs to the formate--tetrahydrofolate ligase family.

The catalysed reaction is (6S)-5,6,7,8-tetrahydrofolate + formate + ATP = (6R)-10-formyltetrahydrofolate + ADP + phosphate. Its pathway is one-carbon metabolism; tetrahydrofolate interconversion. This is Formate--tetrahydrofolate ligase from Caldicellulosiruptor saccharolyticus (strain ATCC 43494 / DSM 8903 / Tp8T 6331).